Here is a 353-residue protein sequence, read N- to C-terminus: Photosystem II protein D1 (353 aa).

T2 is subject to N-acetylthreonine. T2 carries the post-translational modification Phosphothreonine. A run of 3 helical transmembrane segments spans residues 29 to 46 (YIGW…TATS), 118 to 133 (HFLL…EWEL), and 142 to 156 (WIAV…AATA). H118 contacts chlorophyll a. Residue Y126 coordinates pheophytin a. The [CaMn4O5] cluster site is built by D170 and E189. A helical membrane pass occupies residues 197-218 (FHMLGVAGVFGGSLFSAMHGSL). H198 provides a ligand contact to chlorophyll a. Residues H215 and 264–265 (SF) contribute to the a quinone site. H215 lines the Fe cation pocket. H272 serves as a coordination point for Fe cation. Residues 274 to 288 (FLAAWPVVGIWFTAL) traverse the membrane as a helical segment. [CaMn4O5] cluster-binding residues include H332, E333, D342, and A344. Residues 345–353 (ALEVPSING) constitute a propeptide that is removed on maturation.

It belongs to the reaction center PufL/M/PsbA/D family. PSII is composed of 1 copy each of membrane proteins PsbA, PsbB, PsbC, PsbD, PsbE, PsbF, PsbH, PsbI, PsbJ, PsbK, PsbL, PsbM, PsbT, PsbX, PsbY, PsbZ, Psb30/Ycf12, at least 3 peripheral proteins of the oxygen-evolving complex and a large number of cofactors. It forms dimeric complexes. The D1/D2 heterodimer binds P680, chlorophylls that are the primary electron donor of PSII, and subsequent electron acceptors. It shares a non-heme iron and each subunit binds pheophytin, quinone, additional chlorophylls, carotenoids and lipids. D1 provides most of the ligands for the Mn4-Ca-O5 cluster of the oxygen-evolving complex (OEC). There is also a Cl(-1) ion associated with D1 and D2, which is required for oxygen evolution. The PSII complex binds additional chlorophylls, carotenoids and specific lipids. serves as cofactor. Post-translationally, tyr-161 forms a radical intermediate that is referred to as redox-active TyrZ, YZ or Y-Z. In terms of processing, C-terminally processed by CTPA; processing is essential to allow assembly of the oxygen-evolving complex and thus photosynthetic growth.

It is found in the plastid. The protein localises to the chloroplast thylakoid membrane. The catalysed reaction is 2 a plastoquinone + 4 hnu + 2 H2O = 2 a plastoquinol + O2. Functionally, photosystem II (PSII) is a light-driven water:plastoquinone oxidoreductase that uses light energy to abstract electrons from H(2)O, generating O(2) and a proton gradient subsequently used for ATP formation. It consists of a core antenna complex that captures photons, and an electron transfer chain that converts photonic excitation into a charge separation. The D1/D2 (PsbA/PsbD) reaction center heterodimer binds P680, the primary electron donor of PSII as well as several subsequent electron acceptors. The protein is Photosystem II protein D1 of Agrostis stolonifera (Creeping bentgrass).